We begin with the raw amino-acid sequence, 147 residues long: Large ribosomal subunit protein uL16 (147 aa).

It belongs to the universal ribosomal protein uL16 family. As to quaternary structure, part of the 50S ribosomal subunit.

Its function is as follows. Binds 23S rRNA and is also seen to make contacts with the A and possibly P site tRNAs. The polypeptide is Large ribosomal subunit protein uL16 (Clostridium novyi (strain NT)).